We begin with the raw amino-acid sequence, 362 residues long: Methylthioribose-1-phosphate isomerase (362 aa).

Residues 53–55, R90, and Q201 contribute to the substrate site; that span reads RGA. D242 acts as the Proton donor in catalysis. 252–253 provides a ligand contact to substrate; the sequence is NK.

This sequence belongs to the eIF-2B alpha/beta/delta subunits family. MtnA subfamily.

It catalyses the reaction 5-(methylsulfanyl)-alpha-D-ribose 1-phosphate = 5-(methylsulfanyl)-D-ribulose 1-phosphate. It functions in the pathway amino-acid biosynthesis; L-methionine biosynthesis via salvage pathway; L-methionine from S-methyl-5-thio-alpha-D-ribose 1-phosphate: step 1/6. Its function is as follows. Catalyzes the interconversion of methylthioribose-1-phosphate (MTR-1-P) into methylthioribulose-1-phosphate (MTRu-1-P). The chain is Methylthioribose-1-phosphate isomerase from Paramagnetospirillum magneticum (strain ATCC 700264 / AMB-1) (Magnetospirillum magneticum).